Reading from the N-terminus, the 656-residue chain is Protein EMBRYO SAC DEVELOPMENT ARREST 30 (656 aa).

A helical; Signal-anchor for type II membrane protein transmembrane segment spans residues 9-29 (WIALFVLILSMGSLVVHLSMT). Asn119 carries an N-linked (GlcNAc...) asparagine glycan. The tract at residues 381-426 (LSELVGPETPLPENTYKMPPRKSDKQLKEEWNKAGPRPRPLPPPPD) is disordered. Positions 401–412 (RKSDKQLKEEWN) are enriched in basic and acidic residues. Positions 417–426 (RPRPLPPPPD) are enriched in pro residues. N-linked (GlcNAc...) asparagine glycosylation is found at Asn444, Asn522, Asn534, and Asn544. Residues 631–656 (SETEEEFAKSKVASAFDQDEEWDPND) are disordered. The span at 647–656 (DQDEEWDPND) shows a compositional bias: acidic residues.

This sequence belongs to the glycosyltransferase GT106 family.

It localises to the membrane. It participates in glycan metabolism. This Arabidopsis thaliana (Mouse-ear cress) protein is Protein EMBRYO SAC DEVELOPMENT ARREST 30.